The chain runs to 273 residues: Formamidopyrimidine-DNA glycosylase (273 aa).

The active-site Schiff-base intermediate with DNA is the Pro2. The active-site Proton donor is Glu3. Lys58 (proton donor; for beta-elimination activity) is an active-site residue. DNA is bound by residues His91 and Arg110. The FPG-type zinc finger occupies 238–272; sequence QVYGKTGQPCPRCASMIVKIKLGGRGTHLCPHCQK. The active-site Proton donor; for delta-elimination activity is Arg262.

Belongs to the FPG family. As to quaternary structure, monomer. Zn(2+) is required as a cofactor.

It catalyses the reaction Hydrolysis of DNA containing ring-opened 7-methylguanine residues, releasing 2,6-diamino-4-hydroxy-5-(N-methyl)formamidopyrimidine.. The enzyme catalyses 2'-deoxyribonucleotide-(2'-deoxyribose 5'-phosphate)-2'-deoxyribonucleotide-DNA = a 3'-end 2'-deoxyribonucleotide-(2,3-dehydro-2,3-deoxyribose 5'-phosphate)-DNA + a 5'-end 5'-phospho-2'-deoxyribonucleoside-DNA + H(+). In terms of biological role, involved in base excision repair of DNA damaged by oxidation or by mutagenic agents. Acts as a DNA glycosylase that recognizes and removes damaged bases. Has a preference for oxidized purines, such as 7,8-dihydro-8-oxoguanine (8-oxoG). Has AP (apurinic/apyrimidinic) lyase activity and introduces nicks in the DNA strand. Cleaves the DNA backbone by beta-delta elimination to generate a single-strand break at the site of the removed base with both 3'- and 5'-phosphates. The sequence is that of Formamidopyrimidine-DNA glycosylase from Streptococcus thermophilus (strain CNRZ 1066).